We begin with the raw amino-acid sequence, 219 residues long: MKKLVVIYSGGMDSFTALNKAVKEGFDVYALSFDYGQKHNKELIYAQNVCNELNVPHKILDIKSISTLFTSSSLVSDDINVPDGHYEADNMKSTVVPNRNMILISLAIGYAVDIEAEGVWYGAHSGDHLIYPDCRPEFVKVMDQASKVANFEPVYVHAPYLNTDKIGILKDGIKMGLDYSKTWTCYQGKEKACGTCGSCVERLEAFQANNIDDPVQYSI.

8 to 18 (YSGGMDSFTAL) contributes to the ATP binding site. 4 residues coordinate Zn(2+): Cys-185, Cys-193, Cys-196, and Cys-199.

This sequence belongs to the QueC family. Zn(2+) is required as a cofactor.

It carries out the reaction 7-carboxy-7-deazaguanine + NH4(+) + ATP = 7-cyano-7-deazaguanine + ADP + phosphate + H2O + H(+). The protein operates within purine metabolism; 7-cyano-7-deazaguanine biosynthesis. Functionally, catalyzes the ATP-dependent conversion of 7-carboxy-7-deazaguanine (CDG) to 7-cyano-7-deazaguanine (preQ(0)). The polypeptide is 7-cyano-7-deazaguanine synthase 2 (Colwellia psychrerythraea (strain 34H / ATCC BAA-681) (Vibrio psychroerythus)).